The sequence spans 378 residues: Erythronate-4-phosphate dehydrogenase (378 aa).

Substrate contacts are provided by Ser45 and Thr66. 2 residues coordinate NAD(+): Asp146 and Thr175. Arg208 is an active-site residue. Position 232 (Asp232) interacts with NAD(+). Glu237 is an active-site residue. His254 functions as the Proton donor in the catalytic mechanism. Position 257 (Gly257) interacts with NAD(+). Residue Tyr258 coordinates substrate.

It belongs to the D-isomer specific 2-hydroxyacid dehydrogenase family. PdxB subfamily. As to quaternary structure, homodimer.

It localises to the cytoplasm. The catalysed reaction is 4-phospho-D-erythronate + NAD(+) = (R)-3-hydroxy-2-oxo-4-phosphooxybutanoate + NADH + H(+). The protein operates within cofactor biosynthesis; pyridoxine 5'-phosphate biosynthesis; pyridoxine 5'-phosphate from D-erythrose 4-phosphate: step 2/5. Functionally, catalyzes the oxidation of erythronate-4-phosphate to 3-hydroxy-2-oxo-4-phosphonooxybutanoate. The chain is Erythronate-4-phosphate dehydrogenase from Salmonella arizonae (strain ATCC BAA-731 / CDC346-86 / RSK2980).